Reading from the N-terminus, the 213-residue chain is Orotate phosphoribosyltransferase (213 aa).

Position 26 (Lys-26) interacts with 5-phospho-alpha-D-ribose 1-diphosphate. Residue 34 to 35 (FF) coordinates orotate. 5-phospho-alpha-D-ribose 1-diphosphate-binding positions include 72-73 (YK), Arg-98, Lys-99, Lys-102, His-104, and 123-131 (DDVISAGTS). Orotate-binding residues include Ser-127 and Arg-155.

It belongs to the purine/pyrimidine phosphoribosyltransferase family. PyrE subfamily. As to quaternary structure, homodimer. The cofactor is Mg(2+).

The enzyme catalyses orotidine 5'-phosphate + diphosphate = orotate + 5-phospho-alpha-D-ribose 1-diphosphate. It participates in pyrimidine metabolism; UMP biosynthesis via de novo pathway; UMP from orotate: step 1/2. Catalyzes the transfer of a ribosyl phosphate group from 5-phosphoribose 1-diphosphate to orotate, leading to the formation of orotidine monophosphate (OMP). This is Orotate phosphoribosyltransferase from Neisseria meningitidis serogroup C (strain 053442).